A 206-amino-acid chain; its full sequence is dCTP deaminase, dUMP-forming (206 aa).

DCTP is bound by residues 117–122 (RSSFGR), D135, 143–145 (TLE), Q163, Y177, K184, and Q188. The active-site Proton donor/acceptor is the E145.

This sequence belongs to the dCTP deaminase family. Homotrimer.

The enzyme catalyses dCTP + 2 H2O = dUMP + NH4(+) + diphosphate. It participates in pyrimidine metabolism; dUMP biosynthesis; dUMP from dCTP: step 1/1. Bifunctional enzyme that catalyzes both the deamination of dCTP to dUTP and the hydrolysis of dUTP to dUMP without releasing the toxic dUTP intermediate. This Methanococcus maripaludis (strain C7 / ATCC BAA-1331) protein is dCTP deaminase, dUMP-forming.